A 261-amino-acid polypeptide reads, in one-letter code: Indole-3-glycerol phosphate synthase (261 aa).

Belongs to the TrpC family.

It catalyses the reaction 1-(2-carboxyphenylamino)-1-deoxy-D-ribulose 5-phosphate + H(+) = (1S,2R)-1-C-(indol-3-yl)glycerol 3-phosphate + CO2 + H2O. Its pathway is amino-acid biosynthesis; L-tryptophan biosynthesis; L-tryptophan from chorismate: step 4/5. This Burkholderia ambifaria (strain ATCC BAA-244 / DSM 16087 / CCUG 44356 / LMG 19182 / AMMD) (Burkholderia cepacia (strain AMMD)) protein is Indole-3-glycerol phosphate synthase.